The primary structure comprises 711 residues: Probable cadmium-transporting ATPase (711 aa).

The 64-residue stretch at 3-66 (EKTVYRVDGL…AGAFEHLKII (64 aa)) folds into the HMA domain. Cd(2+)-binding residues include Cys-14 and Cys-17. The next 5 membrane-spanning stretches (helical) occupy residues 89 to 109 (WRLL…IMNG), 111 to 131 (DFYL…YSLF), 151 to 171 (IAII…VVIL), 317 to 337 (TPAI…LFGG), and 347 to 367 (LSVL…VAIV). Asp-398 (4-aspartylphosphate intermediate) is an active-site residue. A helical membrane pass occupies residues 669–689 (VIKLIALLLVIPGWLTLWIAI).

The protein belongs to the cation transport ATPase (P-type) (TC 3.A.3) family. Type IB subfamily.

It localises to the cell membrane. It carries out the reaction Cd(2+)(in) + ATP + H2O = Cd(2+)(out) + ADP + phosphate + H(+). Couples the hydrolysis of ATP with the export of cadmium. The chain is Probable cadmium-transporting ATPase (cadA) from Listeria monocytogenes.